Consider the following 1071-residue polypeptide: MPKRVDINKILVIGSGPIIIGQAAEFDYAGTQACLALKEEGYEVILVNSNPATIMTDTEMADRVYIEPLTPEFLTRIIRKERPDAILPTLGGQTGLNLAVELSERGVLAECGVEVLGTKLSAIQQAEDRDLFRTLMNELNEPVPESEIIHSLEEAEKFVSQIGFPVIVRPAYTLGGTGGGICSNETELKEIVENGLKLSPVHQCLLEKSIAGYKEIEYEVMRDSQDHAIVVCNMENIDPVGIHTGDSIVVAPSQTLSDREYQLLRNVSLKLIRALGIEGGCNVQLALDPDSFQYYIIEVNPRVSRSSALASKATGYPIAKLAAKIAVGLSLDEMMNPVTGKTYAAFEPALDYVVSKIPRWPFDKFESANRKLGTQMKATGEVMAIGRTLEESLLKAVRSLEADVYHLELKDAADISDELLEKRIKKAGDERLFYLAEAYRRGYTVEDLHEFSAIDVFFLHKLFGIVQFEKELKANAGDTDVLRRAKELGFSDQYISREWKMKESELYSLRKQAGIAPVFKMVDTCAAEFESETPYFYSTYEEENESVVTDKKSVMVLGSGPIRIGQGVEFDYATVHSVWAIKQAGYEAIIVNNNPETVSTDFSISDKLYFEPLTIEDVMHIIDLEQPMGVVVQFGGQTAINLADELSARGVKILGTSLEDLDRAEDRDKFEQALGELGVPQPLGKTATSVNQAVSIASDIGYPVLVRPSYVLGGRAMEIVYHEEELLHYMKNAVKINPQHPVLIDRYLTGKEIEVDAVSDGETVVIPGIMEHIERAGVHSGDSIAVYPPQSLTEDIKKKIEQYTIALAKGLNIVGLLNIQFVLSQGEVYVLEVNPRSSRTVPFLSKITGIPMANLATKIILGQKLAAFGYTEGLQPEQQGVFVKAPVFSFAKLRRVDITLGPEMKSTGEVMGKDSTLEKALYKALIASGIQIPNYGSVLLTVADKDKEEGLAIAKRFHAIGYNILATEGTAGYLKEASIPAKVVGKIGQDGPNLLDVIRNGEAQFVINTLTKGKQPARDGFRIRRESVENGVACLTSLDTAEAILRVLESMTFRADQMPAVNTNQEAAVTI.

Residues 1–401 form a carboxyphosphate synthetic domain region; sequence MPKRVDINKI…SLLKAVRSLE (401 aa). Positions 129, 169, 175, 176, 208, 210, 215, 241, 242, 243, 284, and 298 each coordinate ATP. The region spanning 133 to 327 is the ATP-grasp 1 domain; it reads RTLMNELNEP…IAKLAAKIAV (195 aa). Glutamine 284, glutamate 298, and asparagine 300 together coordinate Mg(2+). Residues glutamine 284, glutamate 298, and asparagine 300 each contribute to the Mn(2+) site. The tract at residues 402–546 is oligomerization domain; that stretch reads ADVYHLELKD…YSTYEEENES (145 aa). Residues 547 to 929 are carbamoyl phosphate synthetic domain; that stretch reads VVTDKKSVMV…ALYKALIASG (383 aa). Residues 671-861 form the ATP-grasp 2 domain; it reads EQALGELGVP…MANLATKIIL (191 aa). Arginine 707, arginine 746, leucine 748, glutamate 752, glycine 777, valine 778, histidine 779, serine 780, glutamine 820, and glutamate 832 together coordinate ATP. Residues glutamine 820, glutamate 832, and asparagine 834 each contribute to the Mg(2+) site. Mn(2+) contacts are provided by glutamine 820, glutamate 832, and asparagine 834. Residues 930-1071 form the MGS-like domain; the sequence is IQIPNYGSVL…NTNQEAAVTI (142 aa). Residues 930–1071 are allosteric domain; sequence IQIPNYGSVL…NTNQEAAVTI (142 aa).

The protein belongs to the CarB family. As to quaternary structure, composed of two chains; the small (or glutamine) chain promotes the hydrolysis of glutamine to ammonia, which is used by the large (or ammonia) chain to synthesize carbamoyl phosphate. Tetramer of heterodimers (alpha,beta)4. Interacts with BrxC. It depends on Mg(2+) as a cofactor. The cofactor is Mn(2+).

It catalyses the reaction hydrogencarbonate + L-glutamine + 2 ATP + H2O = carbamoyl phosphate + L-glutamate + 2 ADP + phosphate + 2 H(+). It carries out the reaction hydrogencarbonate + NH4(+) + 2 ATP = carbamoyl phosphate + 2 ADP + phosphate + 2 H(+). It participates in amino-acid biosynthesis; L-arginine biosynthesis; carbamoyl phosphate from bicarbonate: step 1/1. Its pathway is pyrimidine metabolism; UMP biosynthesis via de novo pathway; (S)-dihydroorotate from bicarbonate: step 1/3. Its function is as follows. Small subunit of the glutamine-dependent carbamoyl phosphate synthetase (CPSase). CPSase catalyzes the formation of carbamoyl phosphate from the ammonia moiety of glutamine, carbonate, and phosphate donated by ATP, constituting the first step of the biosynthetic pathway leading to pyrimidine nucleotides. The large subunit (synthetase) binds the substrates ammonia (free or transferred from glutamine from the small subunit), hydrogencarbonate and ATP and carries out an ATP-coupled ligase reaction, activating hydrogencarbonate by forming carboxy phosphate which reacts with ammonia to form carbamoyl phosphate. This Bacillus subtilis (strain 168) protein is Carbamoyl phosphate synthase pyrimidine-specific large chain (pyrAB).